Reading from the N-terminus, the 461-residue chain is MEKKCTLYFLVLLPFFMILVTAELEESPEDSIQLGVTRNKIMTAQYECYQKIMQDPIQQAEGVYCNRTWDGWLCWNDVAAGTESMQLCPDYFQDFDPSEKVTKICDQDGNWFRHPASNRTWTNYTQCNVNTHEKVKTALNLFYLTIIGHGLSIASLLISLGIFFYFKSLSCQRITLHKNLFFSFVCNSVVTIIHLTAVANNQALVATNPVSCKVSQFIHLYLMGCNYFWMLCEGIYLHTLIVVAVFAEKQHLMWYYFLGWGFPLIPACIHAIARSLYYNDNCWISSDTHLLYIIHGPICAALLVNLFFLLNIVRVLITKLKVTHQAESNLYMKAVRATLILVPLLGIEFVLIPWRPEGKIAEEVYDYIMHILMHFQGLLVSTIFCFFNGEVQAILRRNWNQYKIQFGNSFSNSEALRSASYTVSTISDGPGYSHDCPSEHLNGKSIHDIENVLLKPENLYN.

The first 22 residues, 1–22 (MEKKCTLYFLVLLPFFMILVTA), serve as a signal peptide directing secretion. Residues 23-139 (ELEESPEDSI…NTHEKVKTAL (117 aa)) lie on the Extracellular side of the membrane. Cystine bridges form between Cys-48–Cys-74, Cys-65–Cys-105, and Cys-88–Cys-127. 3 N-linked (GlcNAc...) asparagine glycosylation sites follow: Asn-66, Asn-118, and Asn-123. A helical transmembrane segment spans residues 140–164 (NLFYLTIIGHGLSIASLLISLGIFF). The Cytoplasmic segment spans residues 165 to 175 (YFKSLSCQRIT). The helical transmembrane segment at 176-198 (LHKNLFFSFVCNSVVTIIHLTAV) threads the bilayer. The Extracellular segment spans residues 199–209 (ANNQALVATNP). The chain crosses the membrane as a helical span at residues 210-238 (VSCKVSQFIHLYLMGCNYFWMLCEGIYLH). Residues 239–252 (TLIVVAVFAEKQHL) are Cytoplasmic-facing. The chain crosses the membrane as a helical span at residues 253–273 (MWYYFLGWGFPLIPACIHAIA). The Extracellular portion of the chain corresponds to 274–289 (RSLYYNDNCWISSDTH). The interval 288–289 (TH) is required for RAMP3 interaction. Residues 290–314 (LLYIIHGPICAALLVNLFFLLNIVR) traverse the membrane as a helical segment. The Cytoplasmic portion of the chain corresponds to 315 to 329 (VLITKLKVTHQAESN). A helical transmembrane segment spans residues 330 to 351 (LYMKAVRATLILVPLLGIEFVL). The Extracellular segment spans residues 352–366 (IPWRPEGKIAEEVYD). A helical transmembrane segment spans residues 367 to 387 (YIMHILMHFQGLLVSTIFCFF). Residues Ser-420 and Ser-445 each carry the phosphoserine modification.

It belongs to the G-protein coupled receptor 2 family. Heterodimer of CALCRL and RAMP1; the receptor complex functions as CGRP receptor. Heterodimer of CALCRL and RAMP2 or CALCRL and RAMP3; the complexes function as adrenomedullin receptor. Predominantly expressed in the lung and heart.

It localises to the cell membrane. Its function is as follows. G protein-coupled receptor which specificity is determined by its interaction with receptor-activity-modifying proteins (RAMPs). Together with RAMP1, form the receptor complex for calcitonin-gene-related peptides CALCA/CGRP1 and CALCB/CGRP2. Together with RAMP2 or RAMP3, function as receptor complexes for adrenomedullin (ADM and ADM2). Ligand binding causes a conformation change that triggers signaling via guanine nucleotide-binding proteins (G proteins) and modulates the activity of downstream effectors. Activates cAMP-dependent pathway. The polypeptide is Calcitonin gene-related peptide type 1 receptor (Homo sapiens (Human)).